The following is a 163-amino-acid chain: Ubiquitin-like protein 1-ribosomal protein eS31 fusion protein (163 aa).

Residues 1-70 (MVFVKTLNRT…IYVNLELLGG (70 aa)) enclose the Ubiquitin-like domain. Residue glycine 70 forms a Glycyl lysine isopeptide (Gly-Lys) (interchain with K-? in acceptor proteins) linkage. Residues 115–138 (CQQPSCGGGVFMAQHANRHYCGRC) form a C4-type zinc finger.

This sequence in the N-terminal section; belongs to the ubiquitin family. The protein in the C-terminal section; belongs to the eukaryotic ribosomal protein eS31 family.

The protein is Ubiquitin-like protein 1-ribosomal protein eS31 fusion protein (ubl-1) of Caenorhabditis briggsae.